Here is a 319-residue protein sequence, read N- to C-terminus: Acetyl-coenzyme A carboxylase carboxyl transferase subunit alpha (319 aa).

One can recognise a CoA carboxyltransferase C-terminal domain in the interval 35–296 (DLDKEIEQLE…KDMLVKQLEE (262 aa)).

This sequence belongs to the AccA family. As to quaternary structure, acetyl-CoA carboxylase is a heterohexamer composed of biotin carboxyl carrier protein (AccB), biotin carboxylase (AccC) and two subunits each of ACCase subunit alpha (AccA) and ACCase subunit beta (AccD).

Its subcellular location is the cytoplasm. It carries out the reaction N(6)-carboxybiotinyl-L-lysyl-[protein] + acetyl-CoA = N(6)-biotinyl-L-lysyl-[protein] + malonyl-CoA. It participates in lipid metabolism; malonyl-CoA biosynthesis; malonyl-CoA from acetyl-CoA: step 1/1. Its function is as follows. Component of the acetyl coenzyme A carboxylase (ACC) complex. First, biotin carboxylase catalyzes the carboxylation of biotin on its carrier protein (BCCP) and then the CO(2) group is transferred by the carboxyltransferase to acetyl-CoA to form malonyl-CoA. The protein is Acetyl-coenzyme A carboxylase carboxyl transferase subunit alpha of Vibrio atlanticus (strain LGP32) (Vibrio splendidus (strain Mel32)).